The primary structure comprises 422 residues: GTPase Obg (422 aa).

An Obg domain is found at Leu4–Leu161. The OBG-type G domain maps to Ala162–Gln327. Residues Gly168–Ser175, Phe193–Lys197, Asp214–Gly217, Asn281–Asp284, and Ser308–Val310 each bind GTP. Residues Ser175 and Thr195 each coordinate Mg(2+). Positions Thr345–Leu422 constitute an OCT domain.

Belongs to the TRAFAC class OBG-HflX-like GTPase superfamily. OBG GTPase family. Monomer. It depends on Mg(2+) as a cofactor.

The protein localises to the cytoplasm. An essential GTPase which binds GTP, GDP and possibly (p)ppGpp with moderate affinity, with high nucleotide exchange rates and a fairly low GTP hydrolysis rate. Plays a role in control of the cell cycle, stress response, ribosome biogenesis and in those bacteria that undergo differentiation, in morphogenesis control. This chain is GTPase Obg, found in Onion yellows phytoplasma (strain OY-M).